We begin with the raw amino-acid sequence, 96 residues long: Co-chaperonin GroES (96 aa).

Belongs to the GroES chaperonin family. In terms of assembly, heptamer of 7 subunits arranged in a ring. Interacts with the chaperonin GroEL.

The protein resides in the cytoplasm. In terms of biological role, together with the chaperonin GroEL, plays an essential role in assisting protein folding. The GroEL-GroES system forms a nano-cage that allows encapsulation of the non-native substrate proteins and provides a physical environment optimized to promote and accelerate protein folding. GroES binds to the apical surface of the GroEL ring, thereby capping the opening of the GroEL channel. This chain is Co-chaperonin GroES, found in Thiobacillus denitrificans (strain ATCC 25259 / T1).